The sequence spans 138 residues: Envelope glycoprotein N (138 aa).

The N-terminal stretch at 1 to 21 is a signal peptide; the sequence is MEWNTLVLGLLVLSVVAESSG. At 22–101 the chain is on the virion surface side; the sequence is NNSSTSTSAT…SHMYELSLSS (80 aa). A helical membrane pass occupies residues 102-122; that stretch reads FAAWWTMLNALILMGAFCIVL. At 123–138 the chain is on the intravirion side; it reads RHCCFQNFTATTTKGY.

This sequence belongs to the herpesviridae glycoprotein N family. In terms of assembly, interacts (via N-terminus) with gM (via N-terminus). The gM-gN heterodimer forms the gCII complex. Post-translationally, O-glycosylated.

It localises to the virion membrane. Its subcellular location is the host membrane. The protein resides in the host Golgi apparatus. It is found in the host trans-Golgi network. Functionally, envelope glycoprotein necessary for proper maturation of gM and modulation of its membrane fusion activity. Also plays a critical role in virion morphogenesis. The polypeptide is Envelope glycoprotein N (Human cytomegalovirus (strain AD169) (HHV-5)).